The primary structure comprises 464 residues: MMARRDPKSWAKRLVRAQTLQKQRRAPVGPRAPPPDEEDPRLKCKNCGAFGHTARSTRCPMKCWKAALVPATLGKKEGKENLKPWKPRVEANPGPLNKDKGEKEERPRQQDPQRKALLHMFSGKPPEKPLPNGKGSTESSDHLRVASGPMPVHTTSKRPRVDPVLADRSAAEMSGRGSVLASLSPLRKASLSSSSSLGPKERQTGAAADMPQPAVRHQGREPLLVVKPTHSSPEGGCREVPQAASKTHGLLQAARPQAQDKRPAVTSQPCPPAATHSLGLGSNLSFGPGAKRPAQAPIQACLKFPKKPRLGPFQIPESAIQGGELGAPGNLQPPPAATELGPSTSPQMGRRTPAQVPSVDWQPPHSTPCLPTAQACTMSHHSAASHDGAQPLRVLFRRLENGRWSSSLLAAPSFHSPEKPGAFLAQSPHVSEKSEAPCVRVPPSVLYEDLQVSSSSEDSDSDLE.

Disordered regions lie at residues 1–42, 70–387, and 415–437; these read MMAR…DPRL, PATL…ASHD, and HSPE…SEAP. Basic and acidic residues-rich tracts occupy residues 74–89 and 97–114; these read GKKE…KPRV and NKDK…DPQR. Residues 180 to 197 are compositionally biased toward low complexity; that stretch reads LASLSPLRKASLSSSSSL.

The protein belongs to the FAM90 family.

The chain is Protein FAM90A18 from Homo sapiens (Human).